We begin with the raw amino-acid sequence, 527 residues long: Zinc finger CCCH-type with G patch domain-containing protein (527 aa).

The tract at residues 97–126 (GEVSGSSSDMREREDEREEEDDGEVEGEVD) is disordered. Residues 111–125 (DEREEEDDGEVEGEV) are compositionally biased toward acidic residues. The segment at 173 to 200 (QKSMKPCPFFLEDKCRFADNCRFSHGEV) adopts a C3H1-type zinc-finger fold. Residues 268–312 (LREDDLPSCSDSEDDDNGEGEAAFPRVLTQEEDWAPSRSSSAFGG) form a disordered region. A G-patch domain is found at 317-363 (TRGIGSKLMLKMGYEYGKGLGKTSEGRVEPVLAVVLPKGKSLDQCAE). 3 disordered regions span residues 369-396 (TQRK…AHNT), 410-444 (LGNG…YKGG), and 505-527 (KAQE…MTEF). Residues 384–393 (RNKRTRKARA) are compositionally biased toward basic residues. Residues 511–527 (AQRENRKADTHKKMTEF) are compositionally biased toward basic and acidic residues.

It localises to the nucleus. In terms of biological role, transcription repressor that specifically binds the 5'-GGAG[GA]A[GA]A-3' consensus sequence. Represses transcription by recruiting the chromatin multiprotein complex NuRD to target promoters. Negatively regulates expression of EGFR, a gene involved in cell proliferation, survival and migration. This is Zinc finger CCCH-type with G patch domain-containing protein (zgpat) from Salmo salar (Atlantic salmon).